Here is a 241-residue protein sequence, read N- to C-terminus: Proteasome subunit alpha type-5 (241 aa).

An N-acetylmethionine modification is found at Met1. Phosphoserine is present on Ser16. Thr55 is modified (phosphothreonine). Phosphoserine occurs at positions 56 and 63. Ser198 carries O-linked (GlcNAc) serine glycosylation.

This sequence belongs to the peptidase T1A family. The 26S proteasome consists of a 20S proteasome core and two 19S regulatory subunits. The 20S proteasome core is a barrel-shaped complex made of 28 subunits that are arranged in four stacked rings. The two outer rings are each formed by seven alpha subunits, and the two inner rings are formed by seven beta subunits. The proteolytic activity is exerted by three beta-subunits PSMB5, PSMB6 and PSMB7. PSMA5 interacts directly with the PSMG1-PSMG2 heterodimer which promotes 20S proteasome assembly.

Its subcellular location is the cytoplasm. The protein localises to the nucleus. Functionally, component of the 20S core proteasome complex involved in the proteolytic degradation of most intracellular proteins. This complex plays numerous essential roles within the cell by associating with different regulatory particles. Associated with two 19S regulatory particles, forms the 26S proteasome and thus participates in the ATP-dependent degradation of ubiquitinated proteins. The 26S proteasome plays a key role in the maintenance of protein homeostasis by removing misfolded or damaged proteins that could impair cellular functions, and by removing proteins whose functions are no longer required. Associated with the PA200 or PA28, the 20S proteasome mediates ubiquitin-independent protein degradation. This type of proteolysis is required in several pathways including spermatogenesis (20S-PA200 complex) or generation of a subset of MHC class I-presented antigenic peptides (20S-PA28 complex). This is Proteasome subunit alpha type-5 (PSMA5) from Bos taurus (Bovine).